A 553-amino-acid polypeptide reads, in one-letter code: Cytochrome P450 monooxygenase alnD (553 aa).

The helical transmembrane segment at 351–371 (LVGAGFVTSSAFLSWLIYSLV) threads the bilayer. Cysteine 493 is a binding site for heme. Residue asparagine 518 is glycosylated (N-linked (GlcNAc...) asparagine).

It belongs to the cytochrome P450 family. The cofactor is heme.

The protein resides in the membrane. It functions in the pathway polyketide biosynthesis. In terms of biological role, cytochrome P450 monooxygenase; part of the gene cluster that mediates the biosynthesis of asperlin, a polyketide showing anti-inflammatory, antitumor and antibiotic activities. The first step of the asperlin biosynthesis is the production of the intermediate 2,4,6-octatrienoic acid by the highly redusing polyketide synthase alnA with cleavage of the PKS product by the esterase alnB. 2,4,6-octatrienoic acid is further converted to asperlin via several steps involving the remaining enzymes from the cluster. The chain is Cytochrome P450 monooxygenase alnD from Emericella nidulans (strain FGSC A4 / ATCC 38163 / CBS 112.46 / NRRL 194 / M139) (Aspergillus nidulans).